A 185-amino-acid chain; its full sequence is 16S rRNA aminocarboxypropyltransferase (185 aa).

S-adenosyl-L-methionine contacts are provided by T19, I69, L93, Y108, and T112.

The protein belongs to the TDD superfamily. TSR3 family.

It localises to the cytoplasm. It catalyses the reaction an N(1)-methylpseudouridine in rRNA + S-adenosyl-L-methionine = N(1)-methyl-N(3)-[(3S)-3-amino-3-carboxypropyl]pseudouridine in rRNA + S-methyl-5'-thioadenosine + H(+). Aminocarboxypropyltransferase that catalyzes the aminocarboxypropyl transfer on pseudouridine corresponding to position 914 in M.jannaschii 16S rRNA. It constitutes the last step in biosynthesis of the hypermodified N1-methyl-N3-(3-amino-3-carboxypropyl) pseudouridine (m1acp3-Psi). This Vulcanisaeta distributa (strain DSM 14429 / JCM 11212 / NBRC 100878 / IC-017) protein is 16S rRNA aminocarboxypropyltransferase.